A 268-amino-acid chain; its full sequence is Proteasome subunit beta type-4 (268 aa).

Belongs to the peptidase T1B family. The 26S proteasome consists of a 20S proteasome core and two 19S regulatory subunits. The 20S proteasome core is composed of 28 subunits that are arranged in four stacked rings, resulting in a barrel-shaped structure. The two end rings are each formed by seven alpha subunits, and the two central rings are each formed by seven beta subunits. The catalytic chamber with the active sites is on the inside of the barrel.

It is found in the cytoplasm. The protein localises to the nucleus. Non-catalytic component of the proteasome, a multicatalytic proteinase complex which is characterized by its ability to cleave peptides with Arg, Phe, Tyr, Leu, and Glu adjacent to the leaving group at neutral or slightly basic pH. The proteasome has an ATP-dependent proteolytic activity. In Drosophila melanogaster (Fruit fly), this protein is Proteasome subunit beta type-4 (Prosbeta7).